We begin with the raw amino-acid sequence, 145 residues long: Holo-[acyl-carrier-protein] synthase (145 aa).

The Mg(2+) site is built by Asp9 and Glu59.

It belongs to the P-Pant transferase superfamily. AcpS family. It depends on Mg(2+) as a cofactor.

It localises to the cytoplasm. It carries out the reaction apo-[ACP] + CoA = holo-[ACP] + adenosine 3',5'-bisphosphate + H(+). Its function is as follows. Transfers the 4'-phosphopantetheine moiety from coenzyme A to a Ser of acyl-carrier-protein. The sequence is that of Holo-[acyl-carrier-protein] synthase from Nocardia farcinica (strain IFM 10152).